A 358-amino-acid chain; its full sequence is Ion-translocating oxidoreductase complex subunit D (358 aa).

Helical transmembrane passes span Ile-24–Leu-44, Leu-79–Ile-99, and Ile-125–Ile-145. FMN phosphoryl threonine is present on Thr-186. 5 consecutive transmembrane segments (helical) span residues Phe-220–Leu-240, Ile-248–Phe-268, Leu-271–Thr-291, Ser-297–Ile-317, and Gly-321–Ile-341.

It belongs to the NqrB/RnfD family. The complex is composed of six subunits: RnfA, RnfB, RnfC, RnfD, RnfE and RnfG. FMN is required as a cofactor.

The protein resides in the cell inner membrane. Its function is as follows. Part of a membrane-bound complex that couples electron transfer with translocation of ions across the membrane. The chain is Ion-translocating oxidoreductase complex subunit D from Haemophilus influenzae (strain ATCC 51907 / DSM 11121 / KW20 / Rd).